The primary structure comprises 235 residues: MESLETKESKVFTPVYFTSRQILLPLKMISYVSRFLKFEDFRKFIRAMWPNGEANVIFQELLERLSIRKFKAKFYNREEIEVEYKFDRERSGINWILINFKDLLPILGGIMLPDDEDKFQSIFTLEDFLKRNLKVHRCSGGIHTSCHNLGRDSDSDSEAKLDICPFDHYHHFCPDHVIAWFKHYLLTAILLREGVYDELVKNANLPNADHLTSGRRRTEQYWLRVARRKKCRFSQ.

A repeat element region spans residues 57–235; that stretch reads IFQELLERLS…ARRKKCRFSQ (179 aa).

This Campoletis sonorensis (CsIV) protein is Repeat element protein.